Here is an 875-residue protein sequence, read N- to C-terminus: Condensin complex subunit 3 (875 aa).

HEAT repeat units follow at residues 55 to 76 (DRVL…PEID), 77 to 113 (IVQP…CVKE), 117 to 154 (DLYN…DTGD), 157 to 192 (NDVR…TLPF), 222 to 259 (LSIK…ENAD), and 379 to 418 (IGRR…SEND). Positions 459–485 (EEITVSQKSPSPSLPPNELNEPEPDDM) are disordered. HEAT repeat units lie at residues 516–554 (LYMV…LNAD), 556–591 (AFEN…QHGK), and 740–778 (NVHL…PTDL). Residues 831–844 (ERLMENAEENEHAG) are compositionally biased toward basic and acidic residues. Residues 831-875 (ERLMENAEENEHAGAEAISGEIIPDTVEANMEDEEEVYVKQEEDL) form a disordered region.

Belongs to the CND3 (condensin subunit 3) family. In terms of assembly, component of the condensin complex, which contains the cut14/smc2 and cut3/smc2 heterodimer, and three non SMC subunits that probably regulate the complex: cnd1, cnd2 and cnd3.

The protein resides in the nucleus. It is found in the cytoplasm. Its subcellular location is the chromosome. In terms of biological role, regulatory subunit of the condensin complex, a complex required for conversion of interphase chromatin into mitotic-like condense chromosomes. The condensin complex probably introduces positive supercoils into relaxed DNA in the presence of type I topoisomerases and converts nicked DNA into positive knotted forms in the presence of type II topoisomerases. The condensin complex probably also plays a role during interphase. The sequence is that of Condensin complex subunit 3 (cnd3) from Schizosaccharomyces pombe (strain 972 / ATCC 24843) (Fission yeast).